We begin with the raw amino-acid sequence, 1222 residues long: ATP-dependent helicase/nuclease subunit A (1222 aa).

A UvrD-like helicase ATP-binding domain is found at 39–495 (QKRTAQQIEA…ILLKENFRSQ (457 aa)). Position 60 to 67 (60 to 67 (ASAGSGKT)) interacts with ATP. Residues 524–810 (QLIAGSHAQT…NLMTIHKSKG (287 aa)) enclose the UvrD-like helicase C-terminal domain.

The protein belongs to the helicase family. AddA subfamily. As to quaternary structure, heterodimer of AddA and AddB/RexB. Mg(2+) serves as cofactor.

The enzyme catalyses Couples ATP hydrolysis with the unwinding of duplex DNA by translocating in the 3'-5' direction.. The catalysed reaction is ATP + H2O = ADP + phosphate + H(+). Its function is as follows. The heterodimer acts as both an ATP-dependent DNA helicase and an ATP-dependent, dual-direction single-stranded exonuclease. Recognizes the chi site generating a DNA molecule suitable for the initiation of homologous recombination. The AddA nuclease domain is required for chi fragment generation; this subunit has the helicase and 3' -&gt; 5' nuclease activities. The sequence is that of ATP-dependent helicase/nuclease subunit A from Streptococcus pyogenes serotype M2 (strain MGAS10270).